Consider the following 180-residue polypeptide: NADH-quinone oxidoreductase subunit I (180 aa).

4Fe-4S ferredoxin-type domains are found at residues 50–80 and 90–119; these read LTRDPDGEERCVACNLCAVACPVGCISLQKA and EFFRINFSRCIFCGLCEEACPTTAIQLTPD. Positions 60, 63, 66, 70, 99, 102, 105, and 109 each coordinate [4Fe-4S] cluster.

This sequence belongs to the complex I 23 kDa subunit family. As to quaternary structure, NDH-1 is composed of 13 different subunits. Subunits NuoA, H, J, K, L, M, N constitute the membrane sector of the complex. [4Fe-4S] cluster serves as cofactor.

It is found in the cell inner membrane. It carries out the reaction a quinone + NADH + 5 H(+)(in) = a quinol + NAD(+) + 4 H(+)(out). Functionally, NDH-1 shuttles electrons from NADH, via FMN and iron-sulfur (Fe-S) centers, to quinones in the respiratory chain. The immediate electron acceptor for the enzyme in this species is believed to be ubiquinone. Couples the redox reaction to proton translocation (for every two electrons transferred, four hydrogen ions are translocated across the cytoplasmic membrane), and thus conserves the redox energy in a proton gradient. The sequence is that of NADH-quinone oxidoreductase subunit I from Yersinia enterocolitica serotype O:8 / biotype 1B (strain NCTC 13174 / 8081).